We begin with the raw amino-acid sequence, 380 residues long: Cytochrome b (380 aa).

4 helical membrane passes run 34–54 (FGSL…LLAT), 78–99 (WLIR…YLHI), 114–134 (WNTG…GYVL), and 179–199 (FFAL…IHLT). Residues His-84 and His-98 each coordinate heme b. His-183 and His-197 together coordinate heme b. His-202 provides a ligand contact to a ubiquinone. 4 helical membrane-spanning segments follow: residues 227–247 (LKDI…ALFS), 289–309 (LGGV…PFLH), 321–341 (ISQL…WVGS), and 348–368 (FIII…ILFP).

It belongs to the cytochrome b family. As to quaternary structure, the cytochrome bc1 complex contains 11 subunits: 3 respiratory subunits (MT-CYB, CYC1 and UQCRFS1), 2 core proteins (UQCRC1 and UQCRC2) and 6 low-molecular weight proteins (UQCRH/QCR6, UQCRB/QCR7, UQCRQ/QCR8, UQCR10/QCR9, UQCR11/QCR10 and a cleavage product of UQCRFS1). This cytochrome bc1 complex then forms a dimer. Heme b serves as cofactor.

The protein resides in the mitochondrion inner membrane. In terms of biological role, component of the ubiquinol-cytochrome c reductase complex (complex III or cytochrome b-c1 complex) that is part of the mitochondrial respiratory chain. The b-c1 complex mediates electron transfer from ubiquinol to cytochrome c. Contributes to the generation of a proton gradient across the mitochondrial membrane that is then used for ATP synthesis. This is Cytochrome b (MT-CYB) from Pelecanoides magellani (Magellanic diving petrel).